The following is a 151-amino-acid chain: Putative pre-16S rRNA nuclease (151 aa).

Belongs to the YqgF nuclease family.

It is found in the cytoplasm. Could be a nuclease involved in processing of the 5'-end of pre-16S rRNA. This Onion yellows phytoplasma (strain OY-M) protein is Putative pre-16S rRNA nuclease.